The chain runs to 940 residues: Testis-expressed protein 11 (940 aa).

This sequence belongs to the SPO22 family. As to quaternary structure, interacts with SYCP2. Interacts with PBXIP1; may prevent interaction between PBXIP1 and ESR2. Interacts with SHOC1. Interacts with REDIC1. Testis-specific. Not expressed in adult ovaries.

The protein localises to the chromosome. Its function is as follows. Regulator of crossing-over during meiosis. Involved in initiation and/or maintenance of chromosome synapsis and formation of crossovers. This chain is Testis-expressed protein 11 (TEX11), found in Homo sapiens (Human).